Consider the following 220-residue polypeptide: MELYLDTANVAEVERLARIFPIAGVTTNPSIVAASKESIWDVLPRLQNAIGEEGTLFAQTMSRDAKGMVEEAKRLNNAIPGIVVKIPVTAEGLAAIKLLKKEDIVTLGTAVYSASQGLLAALAGAKYVAPYVNRVDAQGGDGIRMVQELQTLLEHHAPDSMVLAASFKTPRQALDCLLAGCQAITLPLDVAQQMLNTPAVESAIEKFEQDWKNAFGNLNL.

Lys85 serves as the catalytic Schiff-base intermediate with substrate.

This sequence belongs to the transaldolase family. Type 3A subfamily. Homodecamer.

Its subcellular location is the cytoplasm. The catalysed reaction is beta-D-fructose 6-phosphate = dihydroxyacetone + D-glyceraldehyde 3-phosphate. Catalyzes the reversible formation of fructose 6-phosphate from dihydroxyacetone and D-glyceraldehyde 3-phosphate via an aldolization reaction. In Salmonella agona (strain SL483), this protein is Fructose-6-phosphate aldolase.